Consider the following 372-residue polypeptide: Protein-glutamate methylesterase/protein-glutamine glutaminase 1 (372 aa).

The 118-residue stretch at 4–121 (KVLVVDDSSF…ATNKDDAILL (118 aa)) folds into the Response regulatory domain. The residue at position 55 (Asp-55) is a 4-aspartylphosphate. The tract at residues 138–174 (VVRPTTPTPPPRSSASSVLGGVSTHTQPAPVRSSHAA) is disordered. The region spanning 179–372 (SGKQYKLLLI…ESILKESARG (194 aa)) is the CheB-type methylesterase domain. Active-site residues include Ser-191, His-218, and Asp-314.

It belongs to the CheB family. Post-translationally, phosphorylated by CheA. Phosphorylation of the N-terminal regulatory domain activates the methylesterase activity.

The protein localises to the cytoplasm. The enzyme catalyses [protein]-L-glutamate 5-O-methyl ester + H2O = L-glutamyl-[protein] + methanol + H(+). It carries out the reaction L-glutaminyl-[protein] + H2O = L-glutamyl-[protein] + NH4(+). Involved in chemotaxis. Part of a chemotaxis signal transduction system that modulates chemotaxis in response to various stimuli. Catalyzes the demethylation of specific methylglutamate residues introduced into the chemoreceptors (methyl-accepting chemotaxis proteins or MCP) by CheR. Also mediates the irreversible deamidation of specific glutamine residues to glutamic acid. This Shewanella sp. (strain MR-4) protein is Protein-glutamate methylesterase/protein-glutamine glutaminase 1.